The sequence spans 257 residues: Phosphate import ATP-binding protein PstB (257 aa).

One can recognise an ABC transporter domain in the interval 5 to 246; sequence LEIKDLTAFY…EVIFTSPKNE (242 aa). 37–44 contributes to the ATP binding site; that stretch reads GPSGCGKS.

The protein belongs to the ABC transporter superfamily. Phosphate importer (TC 3.A.1.7) family. In terms of assembly, the complex is composed of two ATP-binding proteins (PstB), two transmembrane proteins (PstC and PstA) and a solute-binding protein (PstS).

It localises to the cell membrane. It carries out the reaction phosphate(out) + ATP + H2O = ADP + 2 phosphate(in) + H(+). Its function is as follows. Part of the ABC transporter complex PstSACB involved in phosphate import. Responsible for energy coupling to the transport system. The protein is Phosphate import ATP-binding protein PstB of Tropheryma whipplei (strain Twist) (Whipple's bacillus).